The following is a 152-amino-acid chain: Transcriptional regulator MraZ (152 aa).

SpoVT-AbrB domains follow at residues 5 to 52 and 81 to 124; these read ASAI…PVQE and AHEC…DEAA.

This sequence belongs to the MraZ family. As to quaternary structure, forms oligomers.

It localises to the cytoplasm. It is found in the nucleoid. This chain is Transcriptional regulator MraZ, found in Shewanella piezotolerans (strain WP3 / JCM 13877).